A 331-amino-acid chain; its full sequence is Ferredoxin--NADP reductase 2 (331 aa).

Positions 37, 45, 50, 90, 124, 286, and 327 each coordinate FAD.

This sequence belongs to the ferredoxin--NADP reductase type 2 family. Homodimer. It depends on FAD as a cofactor.

It catalyses the reaction 2 reduced [2Fe-2S]-[ferredoxin] + NADP(+) + H(+) = 2 oxidized [2Fe-2S]-[ferredoxin] + NADPH. The polypeptide is Ferredoxin--NADP reductase 2 (Listeria monocytogenes serovar 1/2a (strain ATCC BAA-679 / EGD-e)).